The following is an 885-amino-acid chain: Leucine--tRNA ligase (885 aa).

A 'HIGH' region motif is present at residues 48 to 58 (PYPSGKLHMGH). The 'KMSKS' region signature appears at 639–643 (TMSKS). Residue Lys-642 participates in ATP binding.

The protein belongs to the class-I aminoacyl-tRNA synthetase family.

The protein localises to the cytoplasm. It catalyses the reaction tRNA(Leu) + L-leucine + ATP = L-leucyl-tRNA(Leu) + AMP + diphosphate. This Bordetella bronchiseptica (strain ATCC BAA-588 / NCTC 13252 / RB50) (Alcaligenes bronchisepticus) protein is Leucine--tRNA ligase.